The sequence spans 291 residues: ATP synthase gamma chain (291 aa).

The protein belongs to the ATPase gamma chain family. As to quaternary structure, F-type ATPases have 2 components, CF(1) - the catalytic core - and CF(0) - the membrane proton channel. CF(1) has five subunits: alpha(3), beta(3), gamma(1), delta(1), epsilon(1). CF(0) has three main subunits: a, b and c.

It is found in the cell inner membrane. Produces ATP from ADP in the presence of a proton gradient across the membrane. The gamma chain is believed to be important in regulating ATPase activity and the flow of protons through the CF(0) complex. The sequence is that of ATP synthase gamma chain from Methylibium petroleiphilum (strain ATCC BAA-1232 / LMG 22953 / PM1).